Here is a 76-residue protein sequence, read N- to C-terminus: Sulfur carrier protein TusA (76 aa).

The active-site Cysteine persulfide intermediate is cysteine 14.

Belongs to the sulfur carrier protein TusA family. In terms of assembly, interacts with IscS.

The protein localises to the cytoplasm. It participates in tRNA modification. Functionally, sulfur carrier protein involved in sulfur trafficking in the cell. Part of a sulfur-relay system required for 2-thiolation during synthesis of 2-thiouridine of the modified wobble base 5-methylaminomethyl-2-thiouridine (mnm(5)s(2)U) in tRNA. Interacts with IscS and stimulates its cysteine desulfurase activity. Accepts an activated sulfur from IscS, which is then transferred to TusD, and thus determines the direction of sulfur flow from IscS to 2-thiouridine formation. Also appears to be involved in sulfur transfer for the biosynthesis of molybdopterin. The sequence is that of Sulfur carrier protein TusA from Buchnera aphidicola subsp. Acyrthosiphon pisum (strain 5A).